Reading from the N-terminus, the 372-residue chain is NAD(P)H-quinone oxidoreductase subunit 1 (372 aa).

Helical transmembrane passes span 29–49, 97–117, 130–150, 176–196, 204–224, 254–274, 308–328, and 347–367; these read WIPL…LVVV, WLFT…YLIV, VGIF…LMSG, LAFS…IDIV, ILGW…IAAL, FGLF…VFAI, SLGI…AVLL, and FLLP…LAFP.

Belongs to the complex I subunit 1 family. In terms of assembly, NDH-1 is composed of at least 11 different subunits.

Its subcellular location is the cellular thylakoid membrane. It catalyses the reaction a plastoquinone + NADH + (n+1) H(+)(in) = a plastoquinol + NAD(+) + n H(+)(out). The enzyme catalyses a plastoquinone + NADPH + (n+1) H(+)(in) = a plastoquinol + NADP(+) + n H(+)(out). Its function is as follows. NDH-1 shuttles electrons from an unknown electron donor, via FMN and iron-sulfur (Fe-S) centers, to quinones in the respiratory and/or the photosynthetic chain. The immediate electron acceptor for the enzyme in this species is believed to be plastoquinone. Couples the redox reaction to proton translocation, and thus conserves the redox energy in a proton gradient. This Rippkaea orientalis (strain PCC 8801 / RF-1) (Cyanothece sp. (strain PCC 8801)) protein is NAD(P)H-quinone oxidoreductase subunit 1.